Reading from the N-terminus, the 85-residue chain is DNA-directed RNA polymerase subunit omega (85 aa).

This sequence belongs to the RNA polymerase subunit omega family. As to quaternary structure, the RNAP catalytic core consists of 2 alpha, 1 beta, 1 beta' and 1 omega subunit. When a sigma factor is associated with the core the holoenzyme is formed, which can initiate transcription.

The enzyme catalyses RNA(n) + a ribonucleoside 5'-triphosphate = RNA(n+1) + diphosphate. Promotes RNA polymerase assembly. Latches the N- and C-terminal regions of the beta' subunit thereby facilitating its interaction with the beta and alpha subunits. This is DNA-directed RNA polymerase subunit omega from Tropheryma whipplei (strain TW08/27) (Whipple's bacillus).